A 459-amino-acid polypeptide reads, in one-letter code: ATP-dependent protease ATPase subunit HslU (459 aa).

Residues V26, 68-73, D271, E337, and R409 each bind ATP; that span reads GVGKTE.

It belongs to the ClpX chaperone family. HslU subfamily. In terms of assembly, a double ring-shaped homohexamer of HslV is capped on each side by a ring-shaped HslU homohexamer. The assembly of the HslU/HslV complex is dependent on binding of ATP.

Its subcellular location is the cytoplasm. In terms of biological role, ATPase subunit of a proteasome-like degradation complex; this subunit has chaperone activity. The binding of ATP and its subsequent hydrolysis by HslU are essential for unfolding of protein substrates subsequently hydrolyzed by HslV. HslU recognizes the N-terminal part of its protein substrates and unfolds these before they are guided to HslV for hydrolysis. This chain is ATP-dependent protease ATPase subunit HslU, found in Xylella fastidiosa (strain 9a5c).